The chain runs to 505 residues: Probable alpha-L-arabinofuranosidase C (505 aa).

3 N-linked (GlcNAc...) asparagine glycosylation sites follow: Asn-152, Asn-181, and Asn-269.

Belongs to the glycosyl hydrolase 51 family.

The protein localises to the secreted. It catalyses the reaction Hydrolysis of terminal non-reducing alpha-L-arabinofuranoside residues in alpha-L-arabinosides.. It participates in glycan metabolism; L-arabinan degradation. Alpha-L-arabinofuranosidase involved in the degradation of arabinoxylan, a major component of plant hemicellulose. Acts only on small linear 1,5-alpha-linked L-arabinofuranosyl oligosaccharides. The protein is Probable alpha-L-arabinofuranosidase C (abfC) of Aspergillus niger (strain ATCC MYA-4892 / CBS 513.88 / FGSC A1513).